The chain runs to 591 residues: Serine/threonine-protein kinase PAK 4 (591 aa).

Residues 11 to 24 (ISAPSNFEHRVHTG) enclose the CRIB domain. Residues 25-320 (FDQHEQKFTG…VVDPGDPRSY (296 aa)) are linker. Residue S41 is modified to Phosphoserine. K78 is subject to N6-methyllysine. A disordered region spans residues 95–301 (TRSNSLRRDS…PQREPQRVSH (207 aa)). A phosphoserine mark is found at S104 and S148. Basic and acidic residues predominate over residues 149–164 (GDRRRAGPEKRPKSSR). A phosphoserine mark is found at S167 and S181. A Phosphothreonine modification is found at T187. Low complexity predominate over residues 191 to 202 (AGLASGAKLAAG). Position 195 is a phosphoserine (S195). Phosphothreonine is present on T207. Residues 242-260 (SSSSSSRPPTRARGAPSPG) are compositionally biased toward low complexity. A phosphoserine mark is found at S258 and S267. Residues 271–290 (LAPPACTPAAPAVPGPPGPR) are compositionally biased toward pro residues. A Phosphoserine modification is found at S291. Positions 292-301 (PQREPQRVSH) are enriched in basic and acidic residues. The tract at residues 298-323 (RVSHEQFRAALQLVVDPGDPRSYLDN) is GEF-interaction domain (GID). The 252-residue stretch at 321–572 (LDNFIKIGEG…AAELLKHPFL (252 aa)) folds into the Protein kinase domain. Residues 327 to 335 (IGEGSTGIV), K350, and 396 to 398 (EFL) each bind ATP. The active-site Proton acceptor is the D440. 458-460 (DFG) lines the ATP pocket. S474 bears the Phosphoserine; by autocatalysis mark.

Belongs to the protein kinase superfamily. STE Ser/Thr protein kinase family. STE20 subfamily. Interacts with FGFR2 and GRB2. Interacts tightly with GTP-bound but not GDP-bound CDC42/p21 and weakly with RAC1. Interacts with INKA1. Interacts with SH3RF2. Interacts with RHOU and PAXI; the PAK4-RHOU complex protects RHOU from ubiquitination and acts as a scaffold to suppport paxillin/PAXI phosphorylation. Post-translationally, autophosphorylated on serine residues when activated by CDC42/p21. Phosphorylated on tyrosine residues upon stimulation of FGFR2. Methylated by SETD6. In terms of processing, polyubiquitinated, leading to its proteasomal degradation. In terms of tissue distribution, highest expression in prostate, testis and colon.

Its subcellular location is the cytoplasm. It catalyses the reaction L-seryl-[protein] + ATP = O-phospho-L-seryl-[protein] + ADP + H(+). The enzyme catalyses L-threonyl-[protein] + ATP = O-phospho-L-threonyl-[protein] + ADP + H(+). With respect to regulation, inhibited by INKA1; which inhibits the serine/threonine-protein kinase activity by binding PAK4 in a substrate-like manner. Functionally, serine/threonine-protein kinase that plays a role in a variety of different signaling pathways including cytoskeleton regulation, cell adhesion turnover, cell migration, growth, proliferation or cell survival. Activation by various effectors including growth factor receptors or active CDC42 and RAC1 results in a conformational change and a subsequent autophosphorylation on several serine and/or threonine residues. Phosphorylates and inactivates the protein phosphatase SSH1, leading to increased inhibitory phosphorylation of the actin binding/depolymerizing factor cofilin. Decreased cofilin activity may lead to stabilization of actin filaments. Phosphorylates LIMK1, a kinase that also inhibits the activity of cofilin. Phosphorylates integrin beta5/ITGB5 and thus regulates cell motility. Phosphorylates ARHGEF2 and activates the downstream target RHOA that plays a role in the regulation of assembly of focal adhesions and actin stress fibers. Stimulates cell survival by phosphorylating the BCL2 antagonist of cell death BAD. Alternatively, inhibits apoptosis by preventing caspase-8 binding to death domain receptors in a kinase independent manner. Plays a role in cell-cycle progression by controlling levels of the cell-cycle regulatory protein CDKN1A and by phosphorylating RAN. Promotes kinase-independent stabilization of RHOU, thereby contributing to focal adhesion disassembly during cell migration. The polypeptide is Serine/threonine-protein kinase PAK 4 (Homo sapiens (Human)).